Here is a 316-residue protein sequence, read N- to C-terminus: Tyrosine recombinase XerC (316 aa).

The 87-residue stretch at 11-97 (SGLRKPLDQF…SLRSFFDFLI (87 aa)) folds into the Core-binding (CB) domain. One can recognise a Tyr recombinase domain in the interval 118-298 (PLPKNLDVDE…DFQHLADVYD (181 aa)). Active-site residues include Arg157, Lys181, His250, Arg253, and His276. Residue Tyr285 is the O-(3'-phospho-DNA)-tyrosine intermediate of the active site.

This sequence belongs to the 'phage' integrase family. XerC subfamily. As to quaternary structure, forms a cyclic heterotetrameric complex composed of two molecules of XerC and two molecules of XerD.

Its subcellular location is the cytoplasm. Site-specific tyrosine recombinase, which acts by catalyzing the cutting and rejoining of the recombining DNA molecules. The XerC-XerD complex is essential to convert dimers of the bacterial chromosome into monomers to permit their segregation at cell division. It also contributes to the segregational stability of plasmids. The sequence is that of Tyrosine recombinase XerC from Vibrio vulnificus (strain CMCP6).